Consider the following 412-residue polypeptide: G-protein coupled receptor homolog UL33 (412 aa).

Topologically, residues 1–29 (MDTIIHNSTRNNTPPHINDTCNMTGPLFA) are virion surface. N-linked (GlcNAc...) asparagine; by host glycans are attached at residues asparagine 7, asparagine 18, and asparagine 22. A helical transmembrane segment spans residues 30–54 (IRTTEAVLNTFIIFVGGPLNAIVLI). Residues 55–70 (TQLLTNRVLGYSTPTI) lie on the Intravirion side of the membrane. A helical transmembrane segment spans residues 71–95 (YMTNLYSTNFLTLTVLPFIVLSNQW). Residues 96-102 (LLPAGVA) are Virion surface-facing. The helical transmembrane segment at 103-129 (SCKFLSVIYYSSCTVGFATVALIAADR) threads the bilayer. Cysteine 104 and cysteine 188 form a disulfide bridge. The Intravirion segment spans residues 130–138 (YRVLHKRTY). A helical transmembrane segment spans residues 139–160 (ARQSYRSTYMILLLTWLAGLIF). Topologically, residues 161–203 (SVPAAVYTTVVMHHDANDTNNTNGHATCVLYFVAEEVHTVLLS) are virion surface. N-linked (GlcNAc...) asparagine; by host glycosylation is found at asparagine 177 and asparagine 180. Residues 204-224 (WKVLLTMVWGAAPVIMMTWFY) traverse the membrane as a helical segment. At 225–240 (AFFYSTVQRTSQKQRS) the chain is on the intravirion side. The helical transmembrane segment at 241 to 267 (RTLTFVSVLLISFVALQTPYVSLMIFN) threads the bilayer. Topologically, residues 268–281 (SYATTAWPMQCEHL) are virion surface. A helical transmembrane segment spans residues 282–305 (TLRRTIGTLARVVPHLHCLINPIL). The Intravirion segment spans residues 306–412 (YALLGHDFLQ…SQSHHNLSGV (107 aa)). The tract at residues 377–412 (NFPSGTWKGGQKTASNDTSTKIPHRLSQSHHNLSGV) is disordered. Residues 388-397 (KTASNDTSTK) show a composition bias toward polar residues.

It belongs to the G-protein coupled receptor 1 family. In terms of assembly, heterodimerizes with US28.

The protein resides in the virion. It localises to the host cell membrane. Its subcellular location is the host cytoplasm. G-protein-coupled receptor (vGPCR) that constitutively activates multiple oncogenic signaling pathways including STAT3, AP-1, phospholipase C, NF-kappa-B or cAMP-responsive element (CRE) pathways. Plays an important role in viral reactivation from latency through activation of host CREB1, facilitating its recruitment to the viral major immediate early (MIE) genes. In turn, expression of the MIE-driven genes such as UL123 are de-repressed. Also facilitates virus dissemination via the extracellular and cell-to-cell route. In Human cytomegalovirus (strain AD169) (HHV-5), this protein is G-protein coupled receptor homolog UL33 (UL33).